We begin with the raw amino-acid sequence, 364 residues long: MKVIISGGGTGGHVYPGIAIADVLKQKNAENQILFVGAGGKMEMSQVPAAGYPIVGLPIRGINRKLKYIWKNLALPIWVLISLWKVKRIIKDFKPNVVIGTGGYAGFPTIYMAARMHIPIVLQEQNAYAGVANRLLAKYAHKICVAYEGMDAYFPSNKVVLTGNPVRAFLTDKADNYLPSLQYFGLEPGIITVLVLGGSLGAQAISESIIKAAHIFEKHTIQVILSTGNAYFSTIQQADFPAFNKNFKILPYIERMDLAFAAANIVVSRAGAISIAEIASAQKPAIFIPSPNVTADHQMKNVLPLVTKNAAILIKDNEVPDKLVPAILELAKDKQRQRMLVENLSSCFKTHAAESIASLIEDLV.

UDP-N-acetyl-alpha-D-glucosamine contacts are provided by residues 10-12 (TGG), N126, R167, S199, I253, and Q298.

This sequence belongs to the glycosyltransferase 28 family. MurG subfamily.

The protein resides in the cell inner membrane. The enzyme catalyses di-trans,octa-cis-undecaprenyl diphospho-N-acetyl-alpha-D-muramoyl-L-alanyl-D-glutamyl-meso-2,6-diaminopimeloyl-D-alanyl-D-alanine + UDP-N-acetyl-alpha-D-glucosamine = di-trans,octa-cis-undecaprenyl diphospho-[N-acetyl-alpha-D-glucosaminyl-(1-&gt;4)]-N-acetyl-alpha-D-muramoyl-L-alanyl-D-glutamyl-meso-2,6-diaminopimeloyl-D-alanyl-D-alanine + UDP + H(+). The protein operates within cell wall biogenesis; peptidoglycan biosynthesis. Cell wall formation. Catalyzes the transfer of a GlcNAc subunit on undecaprenyl-pyrophosphoryl-MurNAc-pentapeptide (lipid intermediate I) to form undecaprenyl-pyrophosphoryl-MurNAc-(pentapeptide)GlcNAc (lipid intermediate II). This chain is UDP-N-acetylglucosamine--N-acetylmuramyl-(pentapeptide) pyrophosphoryl-undecaprenol N-acetylglucosamine transferase, found in Amoebophilus asiaticus (strain 5a2).